Reading from the N-terminus, the 181-residue chain is c-Myc-binding protein homolog (181 aa).

Residues 111-127 (ESTEAAEQQQQQQQQEN) show a composition bias toward low complexity. Disordered stretches follow at residues 111–145 (ESTE…VAEI) and 159–181 (VVTT…GSSE). The segment covering 168–181 (PSPTVQAEASGSSE) has biased composition (polar residues).

This sequence belongs to the AMY1 family.

The protein localises to the nucleus. The chain is c-Myc-binding protein homolog from Drosophila melanogaster (Fruit fly).